A 265-amino-acid polypeptide reads, in one-letter code: Imidazole glycerol phosphate synthase subunit HisF (265 aa).

Catalysis depends on residues D17 and D136.

Belongs to the HisA/HisF family. As to quaternary structure, heterodimer of HisH and HisF.

The protein localises to the cytoplasm. The catalysed reaction is 5-[(5-phospho-1-deoxy-D-ribulos-1-ylimino)methylamino]-1-(5-phospho-beta-D-ribosyl)imidazole-4-carboxamide + L-glutamine = D-erythro-1-(imidazol-4-yl)glycerol 3-phosphate + 5-amino-1-(5-phospho-beta-D-ribosyl)imidazole-4-carboxamide + L-glutamate + H(+). It participates in amino-acid biosynthesis; L-histidine biosynthesis; L-histidine from 5-phospho-alpha-D-ribose 1-diphosphate: step 5/9. IGPS catalyzes the conversion of PRFAR and glutamine to IGP, AICAR and glutamate. The HisF subunit catalyzes the cyclization activity that produces IGP and AICAR from PRFAR using the ammonia provided by the HisH subunit. This chain is Imidazole glycerol phosphate synthase subunit HisF, found in Mycobacterium avium (strain 104).